A 716-amino-acid polypeptide reads, in one-letter code: Fatty acid oxidation complex subunit alpha (716 aa).

The enoyl-CoA hydratase/isomerase stretch occupies residues 1 to 189 (MIYQSPTIQV…KVGAIDAVVA (189 aa)). D296 is a substrate binding site. The 3-hydroxyacyl-CoA dehydrogenase stretch occupies residues 311–716 (KDVNQAAVLG…AANNGSYYQA (406 aa)). NAD(+) contacts are provided by residues M324, D343, 400–402 (VVE), K407, and S429. The For 3-hydroxyacyl-CoA dehydrogenase activity role is filled by H450. Residue N453 coordinates NAD(+). Positions 500 and 660 each coordinate substrate.

In the N-terminal section; belongs to the enoyl-CoA hydratase/isomerase family. The protein in the C-terminal section; belongs to the 3-hydroxyacyl-CoA dehydrogenase family. As to quaternary structure, heterotetramer of two alpha chains (FadB) and two beta chains (FadA).

It catalyses the reaction a (3S)-3-hydroxyacyl-CoA + NAD(+) = a 3-oxoacyl-CoA + NADH + H(+). It carries out the reaction a (3S)-3-hydroxyacyl-CoA = a (2E)-enoyl-CoA + H2O. The enzyme catalyses a 4-saturated-(3S)-3-hydroxyacyl-CoA = a (3E)-enoyl-CoA + H2O. The catalysed reaction is (3S)-3-hydroxybutanoyl-CoA = (3R)-3-hydroxybutanoyl-CoA. It catalyses the reaction a (3Z)-enoyl-CoA = a 4-saturated (2E)-enoyl-CoA. It carries out the reaction a (3E)-enoyl-CoA = a 4-saturated (2E)-enoyl-CoA. It functions in the pathway lipid metabolism; fatty acid beta-oxidation. Involved in the aerobic and anaerobic degradation of long-chain fatty acids via beta-oxidation cycle. Catalyzes the formation of 3-oxoacyl-CoA from enoyl-CoA via L-3-hydroxyacyl-CoA. It can also use D-3-hydroxyacyl-CoA and cis-3-enoyl-CoA as substrate. In Shewanella frigidimarina (strain NCIMB 400), this protein is Fatty acid oxidation complex subunit alpha.